The sequence spans 876 residues: Senescence-induced receptor-like serine/threonine-protein kinase (876 aa).

An N-terminal signal peptide occupies residues 1–24; sequence MAMLKSLSSILFTSFALLFFLVHA. The Extracellular segment spans residues 25–517; that stretch reads QDQSGFISID…SNTKKKNKNG (493 aa). 3 LRR repeats span residues 415 to 438, 439 to 462, and 463 to 483; these read RVVSLNISFSELRGQIDPAFSNLT, SIRKLDLSGNTLTGEIPAFLANLP, and NLTELNVEGNKLTGIVPQRLH. A helical transmembrane segment spans residues 518–538; that stretch reads YIIPLVVVGIIVVLLTALALF. Residues 539-876 lie on the Cytoplasmic side of the membrane; the sequence is RRFKKKQQRG…LDTEMVPRAR (338 aa). Positions 574–847 constitute a Protein kinase domain; sequence NNFERVIGKG…VVMELKQIVY (274 aa). ATP contacts are provided by residues 580–588 and lysine 601; that span reads IGKGGFGKV. Tyrosine 646 is subject to Phosphotyrosine. The Proton acceptor role is filled by aspartate 697. Residue serine 731 is modified to Phosphoserine. Residue threonine 732 is modified to Phosphothreonine. Residue tyrosine 745 is modified to Phosphotyrosine.

It belongs to the protein kinase superfamily. Ser/Thr protein kinase family.

It is found in the membrane. Involved in innate immune response of plants. The sequence is that of Senescence-induced receptor-like serine/threonine-protein kinase (SIRK) from Arabidopsis thaliana (Mouse-ear cress).